Here is a 235-residue protein sequence, read N- to C-terminus: Probable transcriptional regulatory protein Ccon26_04940 (235 aa).

It belongs to the TACO1 family.

The protein localises to the cytoplasm. The polypeptide is Probable transcriptional regulatory protein Ccon26_04940 (Campylobacter concisus (strain 13826)).